The chain runs to 557 residues: Laccase-11 (557 aa).

The first 23 residues, 1–23 (MKMGFLFLFCYLLAFLGYSPVDA), serve as a signal peptide directing secretion. Plastocyanin-like domains are found at residues 31–147 (DVQV…PAPG) and 158–308 (ESNI…YKGV). 3 N-linked (GlcNAc...) asparagine glycosylation sites follow: Asn-36, Asn-69, and Asn-77. His-81 and His-83 together coordinate Cu cation. N-linked (GlcNAc...) asparagine glycosylation is present at Asn-115. Cu cation is bound by residues His-126 and His-128. N-linked (GlcNAc...) asparagine glycosylation is found at Asn-240, Asn-296, Asn-323, Asn-371, Asn-381, Asn-398, Asn-416, and Asn-440. The region spanning 406-541 (DFPDRPPKAF…KMAFVVENGE (136 aa)) is the Plastocyanin-like 3 domain. Cu cation is bound by residues His-458, His-461, His-463, His-520, Cys-521, His-522, and His-526.

It belongs to the multicopper oxidase family. Requires Cu cation as cofactor. In terms of tissue distribution, ubiquitous and constitutive.

It is found in the secreted. It localises to the extracellular space. The protein localises to the apoplast. The catalysed reaction is 4 hydroquinone + O2 = 4 benzosemiquinone + 2 H2O. Its function is as follows. Lignin degradation and detoxification of lignin-derived products. The sequence is that of Laccase-11 (LAC11) from Arabidopsis thaliana (Mouse-ear cress).